The sequence spans 304 residues: Triplex capsid protein 2 (304 aa).

It belongs to the herpesviridae TRX2 protein family. As to quaternary structure, interacts with TRX1 and major capisd protein/MCP.

It localises to the virion. The protein resides in the host nucleus. Functionally, structural component of the T=16 icosahedral capsid. The capsid is composed of pentamers and hexamers of major capsid protein/MCP, which are linked together by heterotrimers called triplexes. These triplexes are formed by a single molecule of triplex protein 1/TRX1 and two copies of triplex protein 2/TRX2. Additionally, TRX1 is required for efficient transport of TRX2 to the nucleus, which is the site of capsid assembly. This Saimiri sciureus (Common squirrel monkey) protein is Triplex capsid protein 2.